Consider the following 182-residue polypeptide: Isopentenyl-diphosphate Delta-isomerase (182 aa).

Mn(2+) is bound by residues histidine 25 and histidine 32. The Nudix hydrolase domain occupies 30–164 (LLHLAFSSWL…PWAFSPWMVM (135 aa)). Cysteine 67 is an active-site residue. Histidine 69 lines the Mn(2+) pocket. Glutamate 87 contacts Mg(2+). 2 residues coordinate Mn(2+): glutamate 114 and glutamate 116. The active site involves glutamate 116.

This sequence belongs to the IPP isomerase type 1 family. As to quaternary structure, homodimer. Mg(2+) serves as cofactor. Requires Mn(2+) as cofactor.

It localises to the cytoplasm. It carries out the reaction isopentenyl diphosphate = dimethylallyl diphosphate. It functions in the pathway isoprenoid biosynthesis; dimethylallyl diphosphate biosynthesis; dimethylallyl diphosphate from isopentenyl diphosphate: step 1/1. Functionally, catalyzes the 1,3-allylic rearrangement of the homoallylic substrate isopentenyl (IPP) to its highly electrophilic allylic isomer, dimethylallyl diphosphate (DMAPP). This is Isopentenyl-diphosphate Delta-isomerase from Escherichia coli (strain ATCC 8739 / DSM 1576 / NBRC 3972 / NCIMB 8545 / WDCM 00012 / Crooks).